A 185-amino-acid chain; its full sequence is Elongation factor P (185 aa).

The protein belongs to the elongation factor P family.

It localises to the cytoplasm. Its pathway is protein biosynthesis; polypeptide chain elongation. In terms of biological role, involved in peptide bond synthesis. Stimulates efficient translation and peptide-bond synthesis on native or reconstituted 70S ribosomes in vitro. Probably functions indirectly by altering the affinity of the ribosome for aminoacyl-tRNA, thus increasing their reactivity as acceptors for peptidyl transferase. The polypeptide is Elongation factor P (Anoxybacillus flavithermus (strain DSM 21510 / WK1)).